We begin with the raw amino-acid sequence, 151 residues long: Peptide methionine sulfoxide reductase MsrB (151 aa).

Residues 9 to 132 (DGELKRTLTK…NSAALKFIPF (124 aa)) form the MsrB domain. Catalysis depends on C121, which acts as the Nucleophile.

The protein belongs to the MsrB Met sulfoxide reductase family.

It catalyses the reaction L-methionyl-[protein] + [thioredoxin]-disulfide + H2O = L-methionyl-(R)-S-oxide-[protein] + [thioredoxin]-dithiol. This is Peptide methionine sulfoxide reductase MsrB from Mycoplasma pneumoniae (strain ATCC 29342 / M129 / Subtype 1) (Mycoplasmoides pneumoniae).